Consider the following 238-residue polypeptide: Uridylate kinase (238 aa).

Residue 12-15 (KLSG) coordinates ATP. G54 is a binding site for UMP. Residues G55 and R59 each contribute to the ATP site. UMP is bound by residues D74 and 135–142 (TGNPFFTT). ATP is bound by residues T162, Y168, and D171.

It belongs to the UMP kinase family. Homohexamer.

It localises to the cytoplasm. It carries out the reaction UMP + ATP = UDP + ADP. It participates in pyrimidine metabolism; CTP biosynthesis via de novo pathway; UDP from UMP (UMPK route): step 1/1. With respect to regulation, inhibited by UTP. Functionally, catalyzes the reversible phosphorylation of UMP to UDP. This Dechloromonas aromatica (strain RCB) protein is Uridylate kinase.